The sequence spans 107 residues: MVRYRMRSPSEGPHQGPGQDHEREEQGQGQGLSPERVEDYGRTHRGHHHHRHRRCSRKRLHRIHKRRRSCRRRRRHSCRHRRRHRRGCRRSRRRRRCRCRKCRRHHH.

A disordered region spans residues 1 to 94 (MVRYRMRSPS…RRGCRRSRRR (94 aa)). Phosphoserine is present on residues Ser8, Ser10, and Ser33. Residues 43–94 (THRGHHHHRHRRCSRKRLHRIHKRRRSCRRRRRHSCRHRRRHRRGCRRSRRR) show a composition bias toward basic residues.

This sequence belongs to the protamine P2 family. Interacts with TDRP. Post-translationally, proteolytic processing into mature chains is required for histone eviction during spermatogenesis. Transition proteins (TNP1 and TNP2) are required for processing. In terms of tissue distribution, expressed in spermatids (at protein level).

It is found in the nucleus. The protein localises to the chromosome. In terms of biological role, protamines substitute for histones in the chromatin of sperm during the haploid phase of spermatogenesis. They compact sperm DNA into a highly condensed, stable and inactive complex. The polypeptide is Protamine-2 (Prm2) (Mus musculus (Mouse)).